The following is a 462-amino-acid chain: Metal cation symporter ZIP8 (462 aa).

The N-terminal stretch at 1–19 (MAPGRAVAGLLLLAATSLG) is a signal peptide. Topologically, residues 20-132 (HPSEGPELAF…PSLSEVWGYG (113 aa)) are extracellular. N-linked (GlcNAc...) asparagine glycans are attached at residues Asn40, Asn88, and Asn96. The chain crosses the membrane as a helical span at residues 133–153 (FLSVTIINLASLLGLILTPLI). The Cytoplasmic segment spans residues 154-160 (KKSYFPK). Residues 161-181 (ILTYFVGLAIGTLFSNAIFQL) form a helical membrane-spanning segment. Residues 182–191 (IPEAFGFNPK) lie on the Extracellular side of the membrane. The helical transmembrane segment at 192–212 (IDNYVEKAVAVFGGFYMLFFV) threads the bilayer. Residues 213–367 (ERTLKMLLKT…LNAGMSTRQA (155 aa)) lie on the Cytoplasmic side of the membrane. An XEXPHE-motif motif is present at residues 345–350 (EEFPHE). The helical transmembrane segment at 368–388 (LLFNFLSACSCYVGLAFGILV) threads the bilayer. The Extracellular segment spans residues 389–390 (GN). The chain crosses the membrane as a helical span at residues 391–411 (NFAPNIIFALAGGMFLYISLA). At 412-431 (DMFPEMNDMLREKVTGRQTD) the chain is on the cytoplasmic side. Residues 432-452 (FTFFMIQNAGMLTGFTAILLI) form a helical membrane-spanning segment. Residues 453–462 (TLYAGDIELQ) lie on the Extracellular side of the membrane.

The protein belongs to the ZIP transporter (TC 2.A.5) family. As to quaternary structure, homodimer. Post-translationally, N-glycosylated. N-glycosylation is not required for proper iron and zinc transport. Ubiquitously expressed.

It is found in the cell membrane. The protein localises to the apical cell membrane. It localises to the basolateral cell membrane. Its subcellular location is the lysosome membrane. It carries out the reaction Zn(2+)(out) + 2 hydrogencarbonate(out) = Zn(2+)(in) + 2 hydrogencarbonate(in). The catalysed reaction is selenite(out) + Zn(2+)(out) + hydrogencarbonate(out) = selenite(in) + Zn(2+)(in) + hydrogencarbonate(in). The enzyme catalyses Mn(2+)(out) + 2 hydrogencarbonate(out) = Mn(2+)(in) + 2 hydrogencarbonate(in). It catalyses the reaction Cd(2+)(out) + 2 hydrogencarbonate(out) = Cd(2+)(in) + 2 hydrogencarbonate(in). It carries out the reaction Fe(2+)(out) + 2 hydrogencarbonate(out) = Fe(2+)(in) + 2 hydrogencarbonate(in). The catalysed reaction is Co(2+)(out) + 2 hydrogencarbonate(out) = Co(2+)(in) + 2 hydrogencarbonate(in). Functionally, electroneutral divalent metal cation:bicarbonate symporter of the plasma membrane mediating the cellular uptake of zinc and manganese, two divalent metal cations important for development, tissue homeostasis and immunity. Transports an electroneutral complex composed of a divalent metal cation and two bicarbonate anions or alternatively a bicarbonate and a selenite anion. Thereby, it also contributes to the cellular uptake of selenium, an essential trace metal and micronutrient. Also imports cadmium a non-essential metal which is cytotoxic and carcinogenic. May also transport iron and cobalt through membranes. Through zinc import, indirectly regulates the metal-dependent transcription factor MTF1 and the expression of some metalloproteases involved in cartilage catabolism and also probably heart development. Also indirectly regulates the expression of proteins involved in cell morphology and cytoskeleton organization. Indirectly controls innate immune function and inflammatory response by regulating zinc cellular uptake which in turn modulates the expression of genes specific of these processes. Protects, for instance, cells from injury and death at the onset of inflammation. By regulating zinc influx into monocytes also directly modulates their adhesion to endothelial cells and arteries. Reclaims manganese from the bile at the apical membrane of hepatocytes, thereby regulating the activity of the manganese-dependent enzymes through the systemic levels of the nutrient. Also participates in manganese reabsorption in the proximal tubule of the kidney. By mediating the extracellular uptake of manganese by cells of the blood-brain barrier, may also play a role in the transport of the micronutrient to the brain. With manganese cellular uptake also participates in mitochondrial proper function. Finally, also probably functions intracellularly, translocating zinc from lysosome to cytosol to indirectly enhance the expression of specific genes during TCR-mediated T cell activation. The sequence is that of Metal cation symporter ZIP8 from Mus musculus (Mouse).